A 1114-amino-acid polypeptide reads, in one-letter code: Translation initiation factor IF-2 (1114 aa).

Disordered stretches follow at residues 69–102 and 181–507; these read SIKK…PLLI and INNN…KRRA. Basic and acidic residues predominate over residues 85–96; the sequence is SKKETPLKDNSN. The segment covering 181-198 has biased composition (polar residues); the sequence is INNNVKSNESSQNISSAG. The span at 240-251 shows a compositional bias: low complexity; it reads INPNKQNNKQNI. Residues 252–261 show a composition bias toward polar residues; it reads AFKQTGSNRI. Low complexity-rich tracts occupy residues 262 to 278, 290 to 309, and 321 to 337; these read GSPN…GLRN, NRQG…GLRN, and NRQG…NRPG. Positions 365–375 are enriched in basic and acidic residues; it reads NSEKDNKDKNN. A compositionally biased stretch (low complexity) spans 376–385; that stretch reads NAKQNINGPN. Positions 417–431 are enriched in basic and acidic residues; the sequence is GKTDWDDSAKLEALR. Positions 489-505 are enriched in basic residues; it reads KQFKKKKKETTRQRQKR. Residues 606–778 enclose the tr-type G domain; it reads RRPPVITVMG…ILLVSEVEDL (173 aa). Residues 615–622 form a G1 region; it reads GHVDHGKT. 615–622 lines the GTP pocket; the sequence is GHVDHGKT. The tract at residues 640–644 is G2; sequence GITQH. Positions 665–668 are G3; that stretch reads DTPG. Residues 665–669 and 719–722 contribute to the GTP site; these read DTPGH and NKID. Residues 719 to 722 form a G4 region; that stretch reads NKID. Residues 755–757 are G5; sequence SAI.

It belongs to the TRAFAC class translation factor GTPase superfamily. Classic translation factor GTPase family. IF-2 subfamily.

The protein resides in the cytoplasm. In terms of biological role, one of the essential components for the initiation of protein synthesis. Protects formylmethionyl-tRNA from spontaneous hydrolysis and promotes its binding to the 30S ribosomal subunits. Also involved in the hydrolysis of GTP during the formation of the 70S ribosomal complex. The chain is Translation initiation factor IF-2 from Prochlorococcus marinus (strain MIT 9301).